The primary structure comprises 1756 residues: Transposon Ty1-PR2 Gag-Pol polyprotein (1756 aa).

3 stretches are compositionally biased toward polar residues: residues 1–10 (MESQQLSNYP), 48–60 (TKANSQQTTTPAS), and 127–152 (QSQFPQYPSSVGTPLSTPSPESGNTF). 3 disordered regions span residues 1–93 (MESQ…MMTQ), 126–173 (PQSQ…RPPP), and 352–421 (GSRN…SKST). Low complexity predominate over residues 153–165 (TDSSSADSDMTST). An RNA-binding region spans residues 299 to 401 (NNGIHINNKV…NSKSKTARAH (103 aa)). The span at 402–418 (NVSTSNNSPSTDNDSIS) shows a compositional bias: low complexity. Asp461 (for protease activity; shared with dimeric partner) is an active-site residue. An integrase-type zinc finger-like region spans residues 583 to 640 (NVHTSESTRKYPYPFIHRMLAHANAQTIRYSLKNNTITYFNESDVDWSSAIDYQCPDC). Positions 660-836 (NSYEPFQYLH…AGLDISTLLP (177 aa)) constitute an Integrase catalytic domain. The Mg(2+) site is built by Asp671 and Asp736. 3 disordered regions span residues 957–1088 (SKAV…ETEK), 1093–1112 (RSPSIDASPPENNSSHNIVP), and 1131–1188 (DLPL…DNET). Residues 961–970 (SPTDSTPPST) are compositionally biased toward low complexity. Over residues 1006–1016 (STPQISNIEST) the composition is skewed to polar residues. The segment covering 1039–1054 (ESSHASKSKDFRHSDS) has biased composition (basic and acidic residues). Composition is skewed to polar residues over residues 1055–1083 (YSENETNHTNVPISSTGGTNNKTVPQISD) and 1102–1112 (PENNSSHNIVP). The short motif at 1179-1213 (KKRSLEDNETEIKVSRDTWNTKNMRSLEPPRSKKR) is the Bipartite nuclear localization signal element. One can recognise a Reverse transcriptase Ty1/copia-type domain in the interval 1339-1477 (NNYYITQLDI…DILGLEIKYQ (139 aa)). The Mg(2+) site is built by Asp1347, Asp1428, Asp1429, Asp1611, Glu1653, and Asp1686. The 143-residue stretch at 1611 to 1753 (DASYGNQPYY…IKTFKLLTNK (143 aa)) folds into the RNase H Ty1/copia-type domain.

The capsid protein forms a homotrimer, from which the VLPs are assembled. The protease is a homodimer, whose active site consists of two apposed aspartic acid residues. Initially, virus-like particles (VLPs) are composed of the structural unprocessed proteins Gag and Gag-Pol, and also contain the host initiator methionine tRNA (tRNA(i)-Met) which serves as a primer for minus-strand DNA synthesis, and a dimer of genomic Ty RNA. Processing of the polyproteins occurs within the particle and proceeds by an ordered pathway, called maturation. First, the protease (PR) is released by autocatalytic cleavage of the Gag-Pol polyprotein yielding capsid protein p45 and a Pol-p154 precursor protein. This cleavage is a prerequisite for subsequent processing of Pol-p154 at the remaining sites to release the mature structural and catalytic proteins. Maturation takes place prior to the RT reaction and is required to produce transposition-competent VLPs.

Its subcellular location is the cytoplasm. It localises to the nucleus. It carries out the reaction DNA(n) + a 2'-deoxyribonucleoside 5'-triphosphate = DNA(n+1) + diphosphate. The catalysed reaction is Endonucleolytic cleavage to 5'-phosphomonoester.. Its function is as follows. Capsid protein (CA) is the structural component of the virus-like particle (VLP), forming the shell that encapsulates the retrotransposons dimeric RNA genome. The particles are assembled from trimer-clustered units and there are holes in the capsid shells that allow for the diffusion of macromolecules. CA also has nucleocapsid-like chaperone activity, promoting primer tRNA(i)-Met annealing to the multipartite primer-binding site (PBS), dimerization of Ty1 RNA and initiation of reverse transcription. Functionally, the aspartyl protease (PR) mediates the proteolytic cleavages of the Gag and Gag-Pol polyproteins after assembly of the VLP. Reverse transcriptase/ribonuclease H (RT) is a multifunctional enzyme that catalyzes the conversion of the retro-elements RNA genome into dsDNA within the VLP. The enzyme displays a DNA polymerase activity that can copy either DNA or RNA templates, and a ribonuclease H (RNase H) activity that cleaves the RNA strand of RNA-DNA heteroduplexes during plus-strand synthesis and hydrolyzes RNA primers. The conversion leads to a linear dsDNA copy of the retrotransposon that includes long terminal repeats (LTRs) at both ends. In terms of biological role, integrase (IN) targets the VLP to the nucleus, where a subparticle preintegration complex (PIC) containing at least integrase and the newly synthesized dsDNA copy of the retrotransposon must transit the nuclear membrane. Once in the nucleus, integrase performs the integration of the dsDNA into the host genome. The protein is Transposon Ty1-PR2 Gag-Pol polyprotein (TY1B-PR2) of Saccharomyces cerevisiae (strain ATCC 204508 / S288c) (Baker's yeast).